We begin with the raw amino-acid sequence, 220 residues long: Guanylate kinase (220 aa).

Residues 16-195 (GLMFVLSSPS…AFESVKAILR (180 aa)) form the Guanylate kinase-like domain. ATP is bound at residue 23 to 30 (SPSGAGKT).

It belongs to the guanylate kinase family.

The protein resides in the cytoplasm. The enzyme catalyses GMP + ATP = GDP + ADP. Functionally, essential for recycling GMP and indirectly, cGMP. This Rhodopseudomonas palustris (strain HaA2) protein is Guanylate kinase.